Here is a 111-residue protein sequence, read N- to C-terminus: Large ribosomal subunit protein uL22 (111 aa).

This sequence belongs to the universal ribosomal protein uL22 family. In terms of assembly, part of the 50S ribosomal subunit.

In terms of biological role, this protein binds specifically to 23S rRNA; its binding is stimulated by other ribosomal proteins, e.g. L4, L17, and L20. It is important during the early stages of 50S assembly. It makes multiple contacts with different domains of the 23S rRNA in the assembled 50S subunit and ribosome. The globular domain of the protein is located near the polypeptide exit tunnel on the outside of the subunit, while an extended beta-hairpin is found that lines the wall of the exit tunnel in the center of the 70S ribosome. This chain is Large ribosomal subunit protein uL22, found in Geotalea uraniireducens (strain Rf4) (Geobacter uraniireducens).